The sequence spans 443 residues: Xaa-Pro dipeptidase (443 aa).

Mn(2+)-binding residues include aspartate 244, aspartate 255, histidine 336, glutamate 381, and glutamate 420.

Belongs to the peptidase M24B family. Bacterial-type prolidase subfamily. Mn(2+) serves as cofactor.

It catalyses the reaction Xaa-L-Pro dipeptide + H2O = an L-alpha-amino acid + L-proline. In terms of biological role, splits dipeptides with a prolyl residue in the C-terminal position. This chain is Xaa-Pro dipeptidase, found in Stenotrophomonas maltophilia (strain R551-3).